A 182-amino-acid chain; its full sequence is Transcriptional repressor NrdR (182 aa).

Residues 1–24 form a disordered region; the sequence is MRCPYCGGLDTQVRDSRPTEDNTA. A zinc finger lies at 3–34; the sequence is CPYCGGLDTQVRDSRPTEDNTAIRRRRICPDC. The span at 12–24 shows a compositional bias: basic and acidic residues; sequence QVRDSRPTEDNTA. Positions 49 to 139 constitute an ATP-cone domain; sequence LMVLKRSGRR…VYRNFREAKD (91 aa). The segment at 146–182 is disordered; it reads ELSQPELAQSDDVKAEGGAEGGRDKPKAAGKPPRSAE. Over residues 156–172 the composition is skewed to basic and acidic residues; sequence DDVKAEGGAEGGRDKPK.

The protein belongs to the NrdR family. Zn(2+) serves as cofactor.

Its function is as follows. Negatively regulates transcription of bacterial ribonucleotide reductase nrd genes and operons by binding to NrdR-boxes. The sequence is that of Transcriptional repressor NrdR from Xanthobacter autotrophicus (strain ATCC BAA-1158 / Py2).